A 109-amino-acid chain; its full sequence is MSKSKILVGDVVKVIAGSHKGELGPITWISKDKKWVSVQGINSLKHVKPSQTDSEGGIKEVPSKINLSNVALQDPKNKDGISKVGYQIEDGKKVRIAKKSNSPLKKASK.

This sequence belongs to the universal ribosomal protein uL24 family. Part of the 50S ribosomal subunit.

One of two assembly initiator proteins, it binds directly to the 5'-end of the 23S rRNA, where it nucleates assembly of the 50S subunit. Functionally, one of the proteins that surrounds the polypeptide exit tunnel on the outside of the subunit. The sequence is that of Large ribosomal subunit protein uL24 from Mesoplasma florum (strain ATCC 33453 / NBRC 100688 / NCTC 11704 / L1) (Acholeplasma florum).